The sequence spans 342 residues: Methionine import ATP-binding protein MetN (342 aa).

The ABC transporter domain occupies 2–241 (ITLEQVTKIY…PQQPITKRFV (240 aa)). Residue 38–45 (GYSGAGKS) coordinates ATP.

This sequence belongs to the ABC transporter superfamily. Methionine importer (TC 3.A.1.24) family. As to quaternary structure, the complex is composed of two ATP-binding proteins (MetN), two transmembrane proteins (MetI) and a solute-binding protein (MetQ).

The protein resides in the cell membrane. It carries out the reaction L-methionine(out) + ATP + H2O = L-methionine(in) + ADP + phosphate + H(+). It catalyses the reaction D-methionine(out) + ATP + H2O = D-methionine(in) + ADP + phosphate + H(+). In terms of biological role, part of the ABC transporter complex MetNIQ involved in methionine import. Responsible for energy coupling to the transport system. The polypeptide is Methionine import ATP-binding protein MetN (Geobacillus kaustophilus (strain HTA426)).